We begin with the raw amino-acid sequence, 80 residues long: uncharacterized protein (80 aa).

The protein belongs to the BolA/IbaG family.

This is an uncharacterized protein from Buchnera aphidicola subsp. Schizaphis graminum (strain Sg).